The chain runs to 207 residues: Large ribosomal subunit protein uL4 (207 aa).

Residues His49–Ile78 are disordered.

It belongs to the universal ribosomal protein uL4 family. As to quaternary structure, part of the 50S ribosomal subunit.

Functionally, one of the primary rRNA binding proteins, this protein initially binds near the 5'-end of the 23S rRNA. It is important during the early stages of 50S assembly. It makes multiple contacts with different domains of the 23S rRNA in the assembled 50S subunit and ribosome. Forms part of the polypeptide exit tunnel. The protein is Large ribosomal subunit protein uL4 (rplD) of Streptococcus pyogenes serotype M1.